A 216-amino-acid polypeptide reads, in one-letter code: GTP cyclohydrolase-2 (216 aa).

Arg50 to Glu54 contacts GTP. Cys55, Cys66, and Cys68 together coordinate Zn(2+). GTP-binding positions include Gln71, Glu93 to Arg95, and Thr115. Asp127 acts as the Proton acceptor in catalysis. Catalysis depends on Arg129, which acts as the Nucleophile. GTP is bound by residues Thr150 and Lys155.

Belongs to the GTP cyclohydrolase II family. Requires Zn(2+) as cofactor.

It carries out the reaction GTP + 4 H2O = 2,5-diamino-6-hydroxy-4-(5-phosphoribosylamino)-pyrimidine + formate + 2 phosphate + 3 H(+). Its pathway is cofactor biosynthesis; riboflavin biosynthesis; 5-amino-6-(D-ribitylamino)uracil from GTP: step 1/4. Catalyzes the conversion of GTP to 2,5-diamino-6-ribosylamino-4(3H)-pyrimidinone 5'-phosphate (DARP), formate and pyrophosphate. This Histophilus somni (strain 129Pt) (Haemophilus somnus) protein is GTP cyclohydrolase-2.